Here is a 219-residue protein sequence, read N- to C-terminus: Kynurenine formamidase (219 aa).

Tryptophan 28 is a binding site for substrate. Residues histidine 58, histidine 62, and aspartate 64 each contribute to the Zn(2+) site. Histidine 68 functions as the Proton donor/acceptor in the catalytic mechanism. Histidine 170 and glutamate 182 together coordinate Zn(2+).

This sequence belongs to the Cyclase 1 superfamily. KynB family. In terms of assembly, homodimer. The cofactor is Zn(2+).

The catalysed reaction is N-formyl-L-kynurenine + H2O = L-kynurenine + formate + H(+). Its pathway is amino-acid degradation; L-tryptophan degradation via kynurenine pathway; L-kynurenine from L-tryptophan: step 2/2. In terms of biological role, catalyzes the hydrolysis of N-formyl-L-kynurenine to L-kynurenine, the second step in the kynurenine pathway of tryptophan degradation. This is Kynurenine formamidase from Cupriavidus pinatubonensis (strain JMP 134 / LMG 1197) (Cupriavidus necator (strain JMP 134)).